The following is a 335-amino-acid chain: Urokinase plasminogen activator surface receptor (335 aa).

The first 22 residues, 1 to 22, serve as a signal peptide directing secretion; it reads MGHPLLLPLLLLLHTCVPASWG. 3 consecutive UPAR/Ly6 domains span residues 23 to 114, 115 to 213, and 214 to 305; these read LRCM…RSRY, LECI…PQNG, and HQCY…YRKG. 3 disulfide bridges follow: C25–C46, C28–C34, and C39–C67. N-linked (GlcNAc...) asparagine glycosylation is present at N74. Cystine bridges form between C93/C98, C117/C144, C120/C127, C137/C169, C175/C192, C193/C198, C216/C244, C219/C227, C237/C263, C269/C287, and C288/C293. N-linked (GlcNAc...) asparagine glycans are attached at residues N184, N194, N222, and N255. G305 carries GPI-anchor amidated glycine lipidation. A propeptide spans 306 to 335 (removed in mature form); that stretch reads AAPQPGPAHLSLTITLLMTARLWGGTLLWT.

Monomer. Interacts (via the UPAR/Ly6 domains) with SRPX2. Interacts with MRC2. Interacts with FAP (seprase); the interaction occurs at the cell surface of invadopodia membrane. Interacts with SORL1 (via N-terminal ectodomain); this interaction decreases PLAUR internalization. The ternary complex composed of PLAUR-PLAU-SERPINE1 also interacts with SORL1.

It is found in the cell membrane. The protein resides in the cell projection. It localises to the invadopodium membrane. Acts as a receptor for urokinase plasminogen activator. Plays a role in localizing and promoting plasmin formation. Mediates the proteolysis-independent signal transduction activation effects of U-PA. It is subject to negative-feedback regulation by U-PA which cleaves it into an inactive form. The polypeptide is Urokinase plasminogen activator surface receptor (PLAUR) (Chlorocebus aethiops (Green monkey)).